A 432-amino-acid polypeptide reads, in one-letter code: Tyrosine--tRNA ligase (432 aa).

Residue Tyr-35 participates in L-tyrosine binding. A 'HIGH' region motif is present at residues 40–49 (PTAGSLHVGH). Residues Tyr-175 and Gln-179 each coordinate L-tyrosine. The 'KMSKS' region motif lies at 239–243 (KFGKT). An ATP-binding site is contributed by Lys-242. An S4 RNA-binding domain is found at 365-422 (PPLVDLFASTGLVPSKSAARRTIQEGGAYLNNAKVTDIEARVSEADLLHGRYLVLRRG).

It belongs to the class-I aminoacyl-tRNA synthetase family. TyrS type 1 subfamily. In terms of assembly, homodimer.

The protein localises to the cytoplasm. It carries out the reaction tRNA(Tyr) + L-tyrosine + ATP = L-tyrosyl-tRNA(Tyr) + AMP + diphosphate + H(+). Its function is as follows. Catalyzes the attachment of tyrosine to tRNA(Tyr) in a two-step reaction: tyrosine is first activated by ATP to form Tyr-AMP and then transferred to the acceptor end of tRNA(Tyr). In Thermobifida fusca (strain YX), this protein is Tyrosine--tRNA ligase.